The sequence spans 263 residues: Reductase pytE (263 aa).

Belongs to the avfA family.

It functions in the pathway secondary metabolite biosynthesis. Its function is as follows. Reductase; part of the gene cluster that mediates the biosynthesis of pyranterreones, a family of antioxidative compounds. The first step of pyranonigrins biosynthesis is performed by the hybrid PKS-NRPS synthetase pytA that condenses 4 malonyl-CoA units ato the acetyl starter unit by the modular PKS of pytA. The acyl chain is then connected to an L-serine through the amide bond by the modular NRPS of pytA. A tetramic acid is formed and released from the PKS-NRPS pytA to give pyranterreone 5 with the help of the thioesterase pytI. Pyranterreone 5 could be methylated by pytC to afford pyranterreone 6. Both pyranterreones 5 and 6 are subsequently oxidized by the FAD-linked oxidoreductase pytB and the cytochrome P450 monooxygenase pytD to form the fused gamma-pyrone core, resulting in pyranterreones 7 and 11, respectively. The hydroxy group at C-8 of pyranterreones 7 and 11 are dehydrated by the aspartyl protease pytH to form a delta-7 double bond to give pyranterreones 3 and 1, 2 accordingly. The exo-methylene of pyranterreone 3 could be reduced into a pendant methyl by reductase pytE to provide pyranterreone 4, also known as cordylactam. Pyranterreone 4 can be reconverted to pyranterreone 3 through pytB-catalyzed dehydrogenation or further oxidized to pyranterreones 9 and 10. The sequence is that of Reductase pytE from Aspergillus terreus.